Consider the following 212-residue polypeptide: ATP synthase subunit 5, mitochondrial (212 aa).

The transit peptide at 1 to 17 directs the protein to the mitochondrion; it reads MFNRVFTRSFASSLRAA.

This sequence belongs to the ATPase delta chain family. As to quaternary structure, F-type ATPases have 2 components, CF(1) - the catalytic core - and CF(0) - the membrane proton channel. CF(1) has five subunits: alpha(3), beta(3), gamma(1), delta(1), epsilon(1). CF(0) has three main subunits: a, b and c.

The protein localises to the mitochondrion. The protein resides in the mitochondrion inner membrane. Mitochondrial membrane ATP synthase (F(1)F(0) ATP synthase or Complex V) produces ATP from ADP in the presence of a proton gradient across the membrane which is generated by electron transport complexes of the respiratory chain. F-type ATPases consist of two structural domains, F(1) - containing the extramembraneous catalytic core and F(0) - containing the membrane proton channel, linked together by a central stalk and a peripheral stalk. During catalysis, ATP synthesis in the catalytic domain of F(1) is coupled via a rotary mechanism of the central stalk subunits to proton translocation. Part of the complex F(0) domain and the peripheric stalk, which acts as a stator to hold the catalytic alpha(3)beta(3) subcomplex and subunit a/ATP6 static relative to the rotary elements. This chain is ATP synthase subunit 5, mitochondrial (ATP5), found in Saccharomyces cerevisiae (strain ATCC 204508 / S288c) (Baker's yeast).